We begin with the raw amino-acid sequence, 388 residues long: Chorismate synthase (388 aa).

The NADP(+) site is built by Arg39 and Arg45. Residues 130 to 132, 251 to 252, Gly296, 311 to 315, and Arg337 contribute to the FMN site; these read RSS, NA, and KPIPT.

The protein belongs to the chorismate synthase family. In terms of assembly, homotetramer. The cofactor is FMNH2.

The enzyme catalyses 5-O-(1-carboxyvinyl)-3-phosphoshikimate = chorismate + phosphate. The protein operates within metabolic intermediate biosynthesis; chorismate biosynthesis; chorismate from D-erythrose 4-phosphate and phosphoenolpyruvate: step 7/7. Functionally, catalyzes the anti-1,4-elimination of the C-3 phosphate and the C-6 proR hydrogen from 5-enolpyruvylshikimate-3-phosphate (EPSP) to yield chorismate, which is the branch point compound that serves as the starting substrate for the three terminal pathways of aromatic amino acid biosynthesis. This reaction introduces a second double bond into the aromatic ring system. In Streptococcus pneumoniae serotype 2 (strain D39 / NCTC 7466), this protein is Chorismate synthase.